The following is a 109-amino-acid chain: Keratin, type II microfibrillar (109 aa).

The interval 1–10 (QNRQCCESNL) is linker 1. The 109-residue stretch at 1–109 (QNRQCCESNL…RLYEEEIRVL (109 aa)) folds into the IF rod domain. Positions 11–109 (EPLFSGYIET…RLYEEEIRVL (99 aa)) are coil 1B.

The protein belongs to the intermediate filament family.

Its function is as follows. Wool microfibrillar keratin. This Ovis aries (Sheep) protein is Keratin, type II microfibrillar.